The following is a 194-amino-acid chain: ATP-dependent Clp protease proteolytic subunit (194 aa).

S98 functions as the Nucleophile in the catalytic mechanism. The active site involves H123.

The protein belongs to the peptidase S14 family. As to quaternary structure, fourteen ClpP subunits assemble into 2 heptameric rings which stack back to back to give a disk-like structure with a central cavity, resembling the structure of eukaryotic proteasomes.

It is found in the cytoplasm. The enzyme catalyses Hydrolysis of proteins to small peptides in the presence of ATP and magnesium. alpha-casein is the usual test substrate. In the absence of ATP, only oligopeptides shorter than five residues are hydrolyzed (such as succinyl-Leu-Tyr-|-NHMec, and Leu-Tyr-Leu-|-Tyr-Trp, in which cleavage of the -Tyr-|-Leu- and -Tyr-|-Trp bonds also occurs).. Its function is as follows. Cleaves peptides in various proteins in a process that requires ATP hydrolysis. Has a chymotrypsin-like activity. Plays a major role in the degradation of misfolded proteins. The sequence is that of ATP-dependent Clp protease proteolytic subunit from Acetivibrio thermocellus (strain ATCC 27405 / DSM 1237 / JCM 9322 / NBRC 103400 / NCIMB 10682 / NRRL B-4536 / VPI 7372) (Clostridium thermocellum).